The following is a 398-amino-acid chain: L-methionine gamma-lyase (398 aa).

Pyridoxal 5'-phosphate-binding positions include 59 to 61 and 89 to 90; these read YSR and GM. A substrate-binding site is contributed by Tyr114. Residue 208–210 coordinates pyridoxal 5'-phosphate; that stretch reads SAT. Residue Lys211 is modified to N6-(pyridoxal phosphate)lysine. Position 375 (Arg375) interacts with substrate.

This sequence belongs to the trans-sulfuration enzymes family. L-methionine gamma-lyase subfamily. As to quaternary structure, homotetramer; dimer of active dimers. Pyridoxal 5'-phosphate serves as cofactor.

The catalysed reaction is L-methionine + H2O = methanethiol + 2-oxobutanoate + NH4(+). The enzyme catalyses L-homocysteine + H2O = 2-oxobutanoate + hydrogen sulfide + NH4(+) + H(+). Its activity is regulated as follows. Irreversibly inactivated by DL-propargylglycine. Catalyzes the alpha,gamma-elimination of L-methionine to produce methanethiol, 2-oxobutanoate and ammonia. Is involved in L-methionine catabolism. In fact, shows a multicatalytic function since it also catalyzes gamma-replacement of L-methionine with thiol compounds, alpha,gamma-elimination and gamma-replacement reactions of L-homocysteine and its S-substituted derivatives, O-substituted-L-homoserines and DL-selenomethionine, and, to a lesser extent, alpha,beta-elimination and beta-replacement reactions of L-cysteine, S-methyl-L-cysteine, and O-acetyl-L-serine. Also catalyzes deamination and gamma-addition reactions of L-vinylglycine. Thus, the enzyme is able to cleave C-S, C-Se, and C-O bonds of sulfur, selenium, and oxygen amino acids, respectively. The protein is L-methionine gamma-lyase of Pseudomonas putida (Arthrobacter siderocapsulatus).